A 56-amino-acid chain; its full sequence is Potassium channel toxin alpha-KTx 9.2 (56 aa).

Positions 1-28 are cleaved as a signal peptide; the sequence is MSRLFTLVLIVLAMNVMMAIISDPVVEA. 3 disulfides stabilise this stretch: cysteine 31–cysteine 47, cysteine 34–cysteine 52, and cysteine 38–cysteine 54.

Expressed by the venom gland.

The protein resides in the secreted. Blocks small conductance calcium-activated potassium channels (KCNN, SK). Low toxicity by intracerebroventricular injection into mice. This chain is Potassium channel toxin alpha-KTx 9.2, found in Olivierus martensii (Manchurian scorpion).